Here is a 663-residue protein sequence, read N- to C-terminus: UvrABC system protein B (663 aa).

Positions 27–414 (KNIENGVKDQ…SDNHIAEQLI (388 aa)) constitute a Helicase ATP-binding domain. Position 40-47 (40-47 (GVTGSGKT)) interacts with ATP. Residues 93–116 (YYDYYQPEAYIKTTDTYIEKDSSV) carry the Beta-hairpin motif. The Helicase C-terminal domain occupies 432–594 (QVDDLLDEIR…IDPKSIIKEI (163 aa)). The region spanning 624-659 (EKEITKLEKKIKKLVEELDFEQAIILRDEMLKLKEL) is the UVR domain.

This sequence belongs to the UvrB family. As to quaternary structure, forms a heterotetramer with UvrA during the search for lesions. Interacts with UvrC in an incision complex.

The protein localises to the cytoplasm. Its function is as follows. The UvrABC repair system catalyzes the recognition and processing of DNA lesions. A damage recognition complex composed of 2 UvrA and 2 UvrB subunits scans DNA for abnormalities. Upon binding of the UvrA(2)B(2) complex to a putative damaged site, the DNA wraps around one UvrB monomer. DNA wrap is dependent on ATP binding by UvrB and probably causes local melting of the DNA helix, facilitating insertion of UvrB beta-hairpin between the DNA strands. Then UvrB probes one DNA strand for the presence of a lesion. If a lesion is found the UvrA subunits dissociate and the UvrB-DNA preincision complex is formed. This complex is subsequently bound by UvrC and the second UvrB is released. If no lesion is found, the DNA wraps around the other UvrB subunit that will check the other stand for damage. The protein is UvrABC system protein B of Fusobacterium nucleatum subsp. nucleatum (strain ATCC 25586 / DSM 15643 / BCRC 10681 / CIP 101130 / JCM 8532 / KCTC 2640 / LMG 13131 / VPI 4355).